Reading from the N-terminus, the 163-residue chain is Probable chemoreceptor glutamine deamidase CheD (163 aa).

It belongs to the CheD family.

The enzyme catalyses L-glutaminyl-[protein] + H2O = L-glutamyl-[protein] + NH4(+). Probably deamidates glutamine residues to glutamate on methyl-accepting chemotaxis receptors (MCPs), playing an important role in chemotaxis. This chain is Probable chemoreceptor glutamine deamidase CheD, found in Borrelia turicatae (strain 91E135).